Here is a 1435-residue protein sequence, read N- to C-terminus: Neuropathy target esterase sws (1435 aa).

The Lumenal segment spans residues 1–35 (MDVLELLRVSGSNMYYSTFLADAWCYYISNQITMT). Residues 36-56 (MYLYCALGVLSMLFIGWFVYF) form a helical membrane-spanning segment. Over 57 to 1435 (KRLARLRLRH…NTNNETKNYL (1379 aa)) the chain is Cytoplasmic. Residue 176–303 (IFGHFEKPIF…IRVIQVIMIR (128 aa)) coordinates a nucleoside 3',5'-cyclic phosphate. The span at 361-372 (AASGTAGSTHTA) shows a compositional bias: low complexity. Disordered regions lie at residues 361-405 (AASG…ELSG) and 422-452 (NSYPPLYHQRESDGNLSTRRGSITQQEQPEV). Residues 435–449 (GNLSTRRGSITQQEQ) show a composition bias toward polar residues. Serine 443 carries the phosphoserine modification. A nucleoside 3',5'-cyclic phosphate contacts are provided by residues 474–601 (ELGL…VVRR) and 590–717 (IVLD…LSHR). One can recognise a PNPLA domain in the interval 944–1110 (LVLGGGGARG…VNNLPGHLWR (167 aa)). Positions 948–953 (GGGARG) match the GXGXXG motif. Residues 975-979 (GVSIG) carry the GXSXG motif. Residue serine 977 is the Nucleophile of the active site. The Proton acceptor role is filled by aspartate 1097. Positions 1097-1099 (DGG) match the DGA/G motif. The tract at residues 1308-1435 (MDKATQSTPP…NTNNETKNYL (128 aa)) is disordered. Positions 1311–1322 (ATQSTPPLQSKA) are enriched in polar residues. Composition is skewed to basic and acidic residues over residues 1330–1361 (SKEEARHEWEIKREQKQELAREQELERERELS) and 1393–1424 (MDKKKTKDNDRDEVRGSAEDTGKEKEEDKENR). Residues 1425–1435 (SNTNNETKNYL) show a composition bias toward polar residues.

It belongs to the NTE family. Interacts with Pka-C3; interaction inhibits the catalytic function of Pka-C3 and the esterase activity of sws.

It is found in the endoplasmic reticulum membrane. It catalyses the reaction a 1-acyl-sn-glycero-3-phosphocholine + H2O = sn-glycerol 3-phosphocholine + a fatty acid + H(+). Phospholipase B that deacylates intracellular phosphatidylcholine (PtdCho), generating glycerophosphocholine (GroPtdCho). This deacylation occurs at both sn-2 and sn-1 positions of PtdCho. Its specific chemical modification by certain organophosphorus (OP) compounds leads to distal axonopathy. Plays a role in the signaling mechanism between neurons and glia that regulates glia wrapping during development of the adult brain. Essential for membrane lipid homeostasis and cell survival in both neurons and glia of the adult brain. The polypeptide is Neuropathy target esterase sws (Drosophila persimilis (Fruit fly)).